A 303-amino-acid chain; its full sequence is Probable RuBisCO transcriptional regulator (303 aa).

The 58-residue stretch at 6 to 63 (FTLDQLRIFQAIVVEGSFQKAAQSLYISQPAVSLQIQNLEQQLNAPLFDRSHRKAKLT) folds into the HTH lysR-type domain. Residues 23 to 42 (FQKAAQSLYISQPAVSLQIQ) constitute a DNA-binding region (H-T-H motif).

The protein belongs to the LysR transcriptional regulatory family.

It localises to the plastid. The protein resides in the chloroplast. Its function is as follows. Trans-acting transcriptional regulator of RuBisCO genes (rbcL and rbcS) expression. The sequence is that of Probable RuBisCO transcriptional regulator (rbcR) from Cyanidioschyzon merolae (strain NIES-3377 / 10D) (Unicellular red alga).